The sequence spans 161 residues: Phosphopantetheine adenylyltransferase (161 aa).

It belongs to the eukaryotic CoaD family.

Its subcellular location is the cytoplasm. The catalysed reaction is (R)-4'-phosphopantetheine + ATP + H(+) = 3'-dephospho-CoA + diphosphate. Its pathway is cofactor biosynthesis; coenzyme A biosynthesis. Reversibly transfers an adenylyl group from ATP to 4'-phosphopantetheine, yielding dephospho-CoA (dPCoA) and pyrophosphate. This Methanosarcina barkeri (strain Fusaro / DSM 804) protein is Phosphopantetheine adenylyltransferase.